We begin with the raw amino-acid sequence, 462 residues long: MSQMSSASVKFPDSVPGVDYPKQLQLKYLQVIFRHGERAPVKERLGSAGIPKDWKLCNNARRFFAQIKGEKEWSVLGFERKVESPVDTSLAAPTSDNSPSGVCIHGELTDFGRVTTRTLGEYLRERYVKQLKFLPDELNNYADVYMRATPMVRALESLEHVFSGLYPESKRKMGLPVIFTRNWSDENLLPNENNCPRLVQLYEEFAERAAKLYDPLLAGRASEMMSQFMNGQPVRVVSSHPRLSGLLDTINAAIGSHVDFNPNLRDEQWLRDAETAVVEEWFGGYKVSKLMRQLGAGSLLNDLSMRMENFVVAEKNGSPYHRLALYGAHDVTIAAILASLDAFDYRWPPFTSHLEMELFEDTSSKSDSQNQSGDNKTTDLKLFSDESTDASNSAIVAASNSARDMSDWYVRITYNSTPVVMGACRGQGYKGNDTICPLSIFKDTVRALKPVEYHTMCKPVKK.

The Nucleophile role is filled by His-35. Asp-330 (proton donor) is an active-site residue.

Belongs to the histidine acid phosphatase family.

It is found in the mitochondrion. The catalysed reaction is a phosphate monoester + H2O = an alcohol + phosphate. The chain is Probable acid phosphatase SPBC4.06 from Schizosaccharomyces pombe (strain 972 / ATCC 24843) (Fission yeast).